The following is a 250-amino-acid chain: 5-oxoprolinase subunit A (250 aa).

Belongs to the LamB/PxpA family. As to quaternary structure, forms a complex composed of PxpA, PxpB and PxpC.

It catalyses the reaction 5-oxo-L-proline + ATP + 2 H2O = L-glutamate + ADP + phosphate + H(+). Catalyzes the cleavage of 5-oxoproline to form L-glutamate coupled to the hydrolysis of ATP to ADP and inorganic phosphate. This Pseudomonas fluorescens (strain Pf0-1) protein is 5-oxoprolinase subunit A.